The sequence spans 393 residues: Formate-dependent phosphoribosylglycinamide formyltransferase (393 aa).

N(1)-(5-phospho-beta-D-ribosyl)glycinamide contacts are provided by residues 17–18 (EL) and E77. Residues R109, K150, 155-160 (SSGKGQ), 190-193 (EEFL), and E198 each bind ATP. The 191-residue stretch at 114–304 (DLAAGELGLR…EFELHLRAVL (191 aa)) folds into the ATP-grasp domain. Residues E263 and E275 each coordinate Mg(2+). Residues D282, K354, and 361–362 (RR) each bind N(1)-(5-phospho-beta-D-ribosyl)glycinamide.

Belongs to the PurK/PurT family. Homodimer.

It carries out the reaction N(1)-(5-phospho-beta-D-ribosyl)glycinamide + formate + ATP = N(2)-formyl-N(1)-(5-phospho-beta-D-ribosyl)glycinamide + ADP + phosphate + H(+). It participates in purine metabolism; IMP biosynthesis via de novo pathway; N(2)-formyl-N(1)-(5-phospho-D-ribosyl)glycinamide from N(1)-(5-phospho-D-ribosyl)glycinamide (formate route): step 1/1. In terms of biological role, involved in the de novo purine biosynthesis. Catalyzes the transfer of formate to 5-phospho-ribosyl-glycinamide (GAR), producing 5-phospho-ribosyl-N-formylglycinamide (FGAR). Formate is provided by PurU via hydrolysis of 10-formyl-tetrahydrofolate. The protein is Formate-dependent phosphoribosylglycinamide formyltransferase of Synechococcus sp. (strain RCC307).